We begin with the raw amino-acid sequence, 106 residues long: Large ribosomal subunit protein eL42 (106 aa).

Belongs to the eukaryotic ribosomal protein eL42 family.

The chain is Large ribosomal subunit protein eL42 (RPL44) from Schwanniomyces occidentalis (Yeast).